The following is a 290-amino-acid chain: 4-hydroxy-tetrahydrodipicolinate synthase (290 aa).

T45 is a binding site for pyruvate. Y133 serves as the catalytic Proton donor/acceptor. The active-site Schiff-base intermediate with substrate is the K161. I203 serves as a coordination point for pyruvate.

Belongs to the DapA family. As to quaternary structure, homotetramer; dimer of dimers.

The protein localises to the cytoplasm. The enzyme catalyses L-aspartate 4-semialdehyde + pyruvate = (2S,4S)-4-hydroxy-2,3,4,5-tetrahydrodipicolinate + H2O + H(+). It functions in the pathway amino-acid biosynthesis; L-lysine biosynthesis via DAP pathway; (S)-tetrahydrodipicolinate from L-aspartate: step 3/4. Catalyzes the condensation of (S)-aspartate-beta-semialdehyde [(S)-ASA] and pyruvate to 4-hydroxy-tetrahydrodipicolinate (HTPA). The chain is 4-hydroxy-tetrahydrodipicolinate synthase from Cellvibrio japonicus (strain Ueda107) (Pseudomonas fluorescens subsp. cellulosa).